Reading from the N-terminus, the 246-residue chain is mRNA-decapping protein g5R (246 aa).

The 147-residue stretch at 93 to 239 (QKFRKNWLLP…IIGPAFNFIK (147 aa)) folds into the Nudix hydrolase domain. The short motif at 128–149 (GKPKEDESDLTCAIREFEEETG) is the Nudix box element. Glu134 is a binding site for Mg(2+). Residue Glu143 is the Nucleophile of the active site. Residues Glu147 and Asp169 each contribute to the Mg(2+) site.

The protein belongs to the Nudix hydrolase family. DIPP subfamily. As to quaternary structure, interacts with host RPL23A. Mg(2+) is required as a cofactor. It depends on Mn(2+) as a cofactor.

It localises to the host rough endoplasmic reticulum. It carries out the reaction diphospho-myo-inositol polyphosphate + H2O = myo-inositol polyphosphate + phosphate.. In terms of biological role, decapping enzyme required for the removal of the 5'-end m7GpppN cap tethered to viral and host mRNAs to allow their decay in cells. May therefore accelerate viral and cellular mRNA turnover to eliminate competing host mRNAs and allow stage-specific synthesis of viral proteins. Acceleration of the turnover of cellular transcripts may even promote the shutoff of host protein synthesis. In addition to the mRNA cap, g5R also efficiently hydrolyzes diphosphoinositol polyphosphates. Down-regulation of the level of PP-InsP5 (diphosphoinositol pentakisphosphate) may play a role in viral manipulation of the cellular secretory pathway, a step necessary for the formation of virions. Binds viral and cellular poly(A) mRNAs, thereby decreasing both types of mRNAs. The chain is mRNA-decapping protein g5R from African swine fever virus (isolate Warthog/Namibia/Wart80/1980) (ASFV).